The primary structure comprises 360 residues: MKASLLNKLDLLHDRYEELTALLGDAEVIAEQGRFRAYSKEYAEVEPVVAAYREFRKVRDDLAGAQALLKDSDPDLREMAAEEVAEARERLAGLEDRLQRMLLPRDPNDARNVFLEIRAGTGGDEAAIFAGDLFRMYSRYAEKQGWRIEILSENPGEHGGYKEIITRVEGDNVYGKLKFESGAHRVQRVPETESQGRIHTSACTVAVLPEPDEQAAIEINPAELRVDTYRSSGAGGQHVNKTDSAIRITHLPTGIVVECQEERSQHKNRAKAMAWLAAKLQDRQDAAAHREISETRRLLVGSGDRSERIRTYNFPQGRVTEHRINLTLYALDEVMAGGVEAVIEPLLSEYQADQLAALGD.

Position 237 is an N5-methylglutamine (Gln237).

The protein belongs to the prokaryotic/mitochondrial release factor family. In terms of processing, methylated by PrmC. Methylation increases the termination efficiency of RF1.

Its subcellular location is the cytoplasm. In terms of biological role, peptide chain release factor 1 directs the termination of translation in response to the peptide chain termination codons UAG and UAA. This Azotobacter vinelandii (strain DJ / ATCC BAA-1303) protein is Peptide chain release factor 1.